Here is a 362-residue protein sequence, read N- to C-terminus: Acyl-CoA-binding domain-containing protein 3 (362 aa).

An N-terminal signal peptide occupies residues 1-22; that stretch reads MEVFLEMLLTAVVALLFSFLLA. Disordered regions lie at residues 132–151 and 193–214; these read QDEQSDSAEAESISSVSPEN and VEKSSNMVEESDAEAENEEKTE. The stretch at 192-221 forms a coiled coil; it reads RVEKSSNMVEESDAEAENEEKTELTIEEDD. The region spanning 231-318 is the ACB domain; it reads LEKAFAAAVN…VSKEIPGLTK (88 aa). An acyl-CoA contacts are provided by residues 260–264, lysine 286, and tyrosine 305; that span reads FGLHK. Residues 329-362 are disordered; that stretch reads METSVGLPPNSGSLEDPTNLVTTGVDESSKNGIP.

This sequence belongs to the ACBP family. In terms of tissue distribution, expressed in roots, stems, leaves, flowers and siliques.

The protein resides in the secreted. It is found in the extracellular space. Its function is as follows. Binds medium- and long-chain acyl-CoA esters with very high affinity. Can interact in vitro with arachidonyl-CoA, barely with oleoyl-CoA, but not with palmitoyl-CoA. The polypeptide is Acyl-CoA-binding domain-containing protein 3 (ACBP3) (Arabidopsis thaliana (Mouse-ear cress)).